The primary structure comprises 460 residues: Argininosuccinate lyase (460 aa).

This sequence belongs to the lyase 1 family. Argininosuccinate lyase subfamily.

Its subcellular location is the cytoplasm. It carries out the reaction 2-(N(omega)-L-arginino)succinate = fumarate + L-arginine. The protein operates within amino-acid biosynthesis; L-arginine biosynthesis; L-arginine from L-ornithine and carbamoyl phosphate: step 3/3. The sequence is that of Argininosuccinate lyase from Pelotomaculum thermopropionicum (strain DSM 13744 / JCM 10971 / SI).